A 508-amino-acid polypeptide reads, in one-letter code: Photosystem II CP47 reaction center protein (508 aa).

6 helical membrane passes run 21-36 (AVHL…WAGS), 101-115 (IILS…IWHW), 140-156 (GIHL…FGAF), 203-218 (IAAG…FHLS), 237-252 (VLSS…AFVV), and 457-472 (IFAL…HGAR).

The protein belongs to the PsbB/PsbC family. PsbB subfamily. As to quaternary structure, PSII is composed of 1 copy each of membrane proteins PsbA, PsbB, PsbC, PsbD, PsbE, PsbF, PsbH, PsbI, PsbJ, PsbK, PsbL, PsbM, PsbT, PsbY, PsbZ, Psb30/Ycf12, at least 3 peripheral proteins of the oxygen-evolving complex and a large number of cofactors. It forms dimeric complexes. The cofactor is Binds multiple chlorophylls. PSII binds additional chlorophylls, carotenoids and specific lipids..

It localises to the plastid. The protein resides in the chloroplast thylakoid membrane. Its function is as follows. One of the components of the core complex of photosystem II (PSII). It binds chlorophyll and helps catalyze the primary light-induced photochemical processes of PSII. PSII is a light-driven water:plastoquinone oxidoreductase, using light energy to abstract electrons from H(2)O, generating O(2) and a proton gradient subsequently used for ATP formation. In Bigelowiella natans (Pedinomonas minutissima), this protein is Photosystem II CP47 reaction center protein.